The sequence spans 232 residues: Orotate phosphoribosyltransferase (232 aa).

5-phospho-alpha-D-ribose 1-diphosphate-binding positions include Arg107, Lys108, Lys111, His113, and 133-141; that span reads EDLTTAGGS. Thr137 provides a ligand contact to orotate.

This sequence belongs to the purine/pyrimidine phosphoribosyltransferase family. PyrE subfamily. Homodimer. Mg(2+) serves as cofactor.

It catalyses the reaction orotidine 5'-phosphate + diphosphate = orotate + 5-phospho-alpha-D-ribose 1-diphosphate. The protein operates within pyrimidine metabolism; UMP biosynthesis via de novo pathway; UMP from orotate: step 1/2. Its function is as follows. Catalyzes the transfer of a ribosyl phosphate group from 5-phosphoribose 1-diphosphate to orotate, leading to the formation of orotidine monophosphate (OMP). The chain is Orotate phosphoribosyltransferase from Rhizobium meliloti (strain 1021) (Ensifer meliloti).